The sequence spans 931 residues: Semaphorin-6C (931 aa).

An N-terminal signal peptide occupies residues 1 to 25 (MPRAPHSMPLLLLLLLLSSLPQAQA). At 26–605 (AFPQDPTPLL…ASASRSIPIP (580 aa)) the chain is on the extracellular side. The Sema domain occupies 31-517 (PTPLLTSDLQ…FPGCIVYLSL (487 aa)). A glycan (N-linked (GlcNAc...) asparagine) is linked at asparagine 71. Cystine bridges form between cysteine 112/cysteine 122, cysteine 140/cysteine 149, cysteine 263/cysteine 374, and cysteine 288/cysteine 333. Asparagine 287 carries N-linked (GlcNAc...) asparagine glycosylation. N-linked (GlcNAc...) asparagine glycosylation occurs at asparagine 438. 4 disulfide bridges follow: cysteine 480/cysteine 511, cysteine 520/cysteine 538, cysteine 526/cysteine 571, and cysteine 530/cysteine 546. The tract at residues 556–591 (DVDLTGNQESTEHGDCQDGATGSQSGPGDSAYGVRR) is disordered. A helical membrane pass occupies residues 606 to 626 (LLLACVAAAFALGASVSGLLV). Residues 627 to 931 (SCACRRANRR…PAPHGGHFNF (305 aa)) lie on the Cytoplasmic side of the membrane. 2 disordered regions span residues 655–747 (LARL…GGPA) and 777–931 (HGPQ…HFNF). A compositionally biased stretch (low complexity) spans 693-708 (PPELACLPTPETTPEL). Residues 893 to 906 (PEGHRGRSLKRVDV) are compositionally biased toward basic and acidic residues. Residues 911–923 (SPKPPLASPPQPA) show a composition bias toward pro residues.

Belongs to the semaphorin family.

The protein localises to the cell membrane. May be a stop signal for the dorsal root ganglion neurons in their target areas, and possibly also for other neurons. May also be involved in the maintenance and remodeling of neuronal connections. In Mus musculus (Mouse), this protein is Semaphorin-6C (Sema6c).